A 426-amino-acid chain; its full sequence is Serine--tRNA ligase (426 aa).

Position 233 to 235 (233 to 235 (TAE)) interacts with L-serine. Residue 264–266 (RSE) coordinates ATP. Glutamate 287 provides a ligand contact to L-serine. Residue 351 to 354 (EISS) coordinates ATP. Residue serine 387 coordinates L-serine.

It belongs to the class-II aminoacyl-tRNA synthetase family. Type-1 seryl-tRNA synthetase subfamily. In terms of assembly, homodimer. The tRNA molecule binds across the dimer.

The protein resides in the cytoplasm. The catalysed reaction is tRNA(Ser) + L-serine + ATP = L-seryl-tRNA(Ser) + AMP + diphosphate + H(+). The enzyme catalyses tRNA(Sec) + L-serine + ATP = L-seryl-tRNA(Sec) + AMP + diphosphate + H(+). Its pathway is aminoacyl-tRNA biosynthesis; selenocysteinyl-tRNA(Sec) biosynthesis; L-seryl-tRNA(Sec) from L-serine and tRNA(Sec): step 1/1. Functionally, catalyzes the attachment of serine to tRNA(Ser). Is also able to aminoacylate tRNA(Sec) with serine, to form the misacylated tRNA L-seryl-tRNA(Sec), which will be further converted into selenocysteinyl-tRNA(Sec). In Pseudomonas fluorescens (strain Pf0-1), this protein is Serine--tRNA ligase.